Here is a 137-residue protein sequence, read N- to C-terminus: Small ribosomal subunit protein uS12 (137 aa).

Disordered stretches follow at residues 1 to 21 (MPTINQLVRKPRKSKVEKSDS) and 34 to 57 (VHTKLAAPQKRGVATRVGTMTPKK).

This sequence belongs to the universal ribosomal protein uS12 family. In terms of assembly, part of the 30S ribosomal subunit. Contacts proteins S8 and S17. May interact with IF1 in the 30S initiation complex.

In terms of biological role, with S4 and S5 plays an important role in translational accuracy. Functionally, interacts with and stabilizes bases of the 16S rRNA that are involved in tRNA selection in the A site and with the mRNA backbone. Located at the interface of the 30S and 50S subunits, it traverses the body of the 30S subunit contacting proteins on the other side and probably holding the rRNA structure together. The combined cluster of proteins S8, S12 and S17 appears to hold together the shoulder and platform of the 30S subunit. In Streptococcus mutans serotype c (strain ATCC 700610 / UA159), this protein is Small ribosomal subunit protein uS12.